We begin with the raw amino-acid sequence, 627 residues long: Transducer protein MpcT (627 aa).

Transmembrane regions (helical) follow at residues 28-48 and 55-75; these read MLTA…LTVF and LIGV…TYLI. HAMP domains are found at residues 78–132 and 192–247; these read ADFV…VASR and EQLR…DTIS. Residues 266-502 enclose the Methyl-accepting transducer domain; that stretch reads RVDAVADRSA…DVVGMVEEVA (237 aa). Residues E310, E416, and E507 each carry the glutamate methyl ester (Glu) modification. Disordered stretches follow at residues 505-527 and 557-627; these read SEET…DATD and GTAD…ADSQ. Over residues 580 to 590 the composition is skewed to low complexity; it reads AAAVVDQPQPA.

The protein belongs to the methyl-accepting chemotaxis (MCP) protein family. Interacts with CheA, CheY and CheW1. Post-translationally, methylated by CheR.

The protein localises to the cell membrane. Its function is as follows. Mediates bacteriorhodopsin- and halorhodopsin-dependent photoresponses by detecting membrane potential changes. Probably transduces the signal to the histidine kinase CheA. In Halobacterium salinarum (strain ATCC 29341 / DSM 671 / R1), this protein is Transducer protein MpcT (mpcT).